The sequence spans 121 residues: UPF0295 protein BH0952 (121 aa).

The next 2 membrane-spanning stretches (helical) occupy residues 12 to 32 (IRTF…IGIF) and 41 to 61 (VLAM…YFWI).

This sequence belongs to the UPF0295 family.

Its subcellular location is the cell membrane. This is UPF0295 protein BH0952 from Halalkalibacterium halodurans (strain ATCC BAA-125 / DSM 18197 / FERM 7344 / JCM 9153 / C-125) (Bacillus halodurans).